A 494-amino-acid polypeptide reads, in one-letter code: Metal cation symporter ZIP14 (494 aa).

The N-terminal stretch at 1 to 34 (MTLRRASGCRQLTLTIGLALTLGLLQWPIGDVRG) is a signal peptide. Over 35-152 (QDGASPAQVL…PTEAEVWGYG (118 aa)) the chain is Extracellular. A helical transmembrane segment spans residues 153–173 (LLCVTVISLCSLVGASVVPFM). Over 174–181 (RKTFYKRL) the chain is Cytoplasmic. A helical transmembrane segment spans residues 182 to 202 (LLYFIALAIGTLYSNALFQLI). The Extracellular portion of the chain corresponds to 203–219 (PEAFGFDPMEDYYVPKS). Residues 220-240 (AVVFGGFYLFFFTEKILKMIL) traverse the membrane as a helical segment. At 241 to 397 (KPKDTGGHGH…LLNAGMSIQQ (157 aa)) the chain is on the cytoplasmic side. The HHHGHXHX-motif motif lies at 248-255 (HGHGHSHF). Positions 376–381 (EEFPHE) match the XEXPHE-motif motif. The chain crosses the membrane as a helical span at residues 398–418 (ALFFNFLSACCCYLGMGFGIL). The Extracellular portion of the chain corresponds to 419–426 (AGNNFSPN). A helical membrane pass occupies residues 427–447 (WIFALAGGMFLYIALADMFPE). At 448–462 (MNEVSREEEEAGGSG) the chain is on the cytoplasmic side. A helical membrane pass occupies residues 463 to 483 (FLLTFALQNAGLLTGFAIMLV). The Extracellular portion of the chain corresponds to 484–494 (LTIYSGQIQLG).

The protein belongs to the ZIP transporter (TC 2.A.5) family. Homotrimer.

The protein resides in the cell membrane. The protein localises to the apical cell membrane. It localises to the basolateral cell membrane. Its subcellular location is the early endosome membrane. It is found in the late endosome membrane. The protein resides in the lysosome membrane. The catalysed reaction is Zn(2+)(out) + 2 hydrogencarbonate(out) = Zn(2+)(in) + 2 hydrogencarbonate(in). It carries out the reaction Mn(2+)(out) + 2 hydrogencarbonate(out) = Mn(2+)(in) + 2 hydrogencarbonate(in). It catalyses the reaction Fe(2+)(out) + 2 hydrogencarbonate(out) = Fe(2+)(in) + 2 hydrogencarbonate(in). The enzyme catalyses Cd(2+)(out) + 2 hydrogencarbonate(out) = Cd(2+)(in) + 2 hydrogencarbonate(in). Functionally, broad-scope metal ion transporter with a preference for zinc uptake. Also mediates cellular uptake of nontransferrin-bound iron. Its function is as follows. Electroneutral transporter of the plasma membrane mediating the cellular uptake of the divalent metal cations zinc, manganese and iron that are important for tissue homeostasis, metabolism, development and immunity. Functions as an energy-dependent symporter, transporting through the membranes an electroneutral complex composed of a divalent metal cation and two bicarbonate anions. Beside these endogenous cellular substrates, can also import cadmium a non-essential metal which is cytotoxic and carcinogenic. The sequence is that of Metal cation symporter ZIP14 from Danio rerio (Zebrafish).